The sequence spans 517 residues: Ribosome assembly protein 4 (517 aa).

The tract at residues 1–25 (MATLAPPPSKRQRREEIQRTQTQQD) is disordered. The ubiquitin-like (UBL) domain stretch occupies residues 34–128 (LGSFKANFID…TITLSAEPQA (95 aa)). WD repeat units follow at residues 144–184 (GHGQ…PKFT), 187–226 (GHTG…QVNQ), 230–277 (GHAK…HVLS), 278–316 (GHKG…LVHN), 351–397 (EERR…SKPV), 402–441 (GHQN…FIKN), 444–483 (GHVA…LAMD), and 486–517 (GHED…TWRN).

Belongs to the NLE1/RSA4 family. In terms of assembly, associates with the pre-60S ribosomal particle. Interacts (via WD repeats) with uL18. Interacts (via UBL domain) with MDN1 (via VWFA/MIDAS domain). Interacts (via WD repeats) with NSA2.

Its subcellular location is the nucleus. It is found in the nucleolus. Functionally, involved in ribosome biogenesis. Required for processing and efficient intra-nuclear transport of pre-60S ribosomal subunits. Interacts with the AAA-ATPase Midasin, which is essential for the ATP-dependent dissociation of a group of nonribosomal factors from the pre-60S particle. This is Ribosome assembly protein 4 from Chaetomium thermophilum (strain DSM 1495 / CBS 144.50 / IMI 039719) (Thermochaetoides thermophila).